We begin with the raw amino-acid sequence, 170 residues long: Lipoprotein signal peptidase (170 aa).

3 helical membrane passes run 12–32, 67–87, and 93–113; these read WYWV…WVLA, WQRW…TVWL, and SLWK…GNLI. Catalysis depends on residues D123 and D141. The helical transmembrane segment at 137–157 threads the bilayer; the sequence is FNIADSAIFIGAVLIIWDSFF.

It belongs to the peptidase A8 family.

Its subcellular location is the cell inner membrane. It carries out the reaction Release of signal peptides from bacterial membrane prolipoproteins. Hydrolyzes -Xaa-Yaa-Zaa-|-(S,diacylglyceryl)Cys-, in which Xaa is hydrophobic (preferably Leu), and Yaa (Ala or Ser) and Zaa (Gly or Ala) have small, neutral side chains.. Its pathway is protein modification; lipoprotein biosynthesis (signal peptide cleavage). Functionally, this protein specifically catalyzes the removal of signal peptides from prolipoproteins. In Shewanella sp. (strain MR-4), this protein is Lipoprotein signal peptidase.